Here is a 147-residue protein sequence, read N- to C-terminus: Large ribosomal subunit protein uL13 (147 aa).

Belongs to the universal ribosomal protein uL13 family. Part of the 50S ribosomal subunit.

In terms of biological role, this protein is one of the early assembly proteins of the 50S ribosomal subunit, although it is not seen to bind rRNA by itself. It is important during the early stages of 50S assembly. This chain is Large ribosomal subunit protein uL13, found in Mycobacterium leprae (strain Br4923).